Here is a 212-residue protein sequence, read N- to C-terminus: tRNA (guanine-N(7)-)-methyltransferase (212 aa).

Glu44, Asp69, Asp96, and Asp118 together coordinate S-adenosyl-L-methionine. The active site involves Asp118. Position 122 (Lys122) interacts with substrate. The interaction with RNA stretch occupies residues 124–129 (RHEKRR). Substrate is bound by residues Asp154 and 191 to 194 (TEYE).

Belongs to the class I-like SAM-binding methyltransferase superfamily. TrmB family.

It carries out the reaction guanosine(46) in tRNA + S-adenosyl-L-methionine = N(7)-methylguanosine(46) in tRNA + S-adenosyl-L-homocysteine. It functions in the pathway tRNA modification; N(7)-methylguanine-tRNA biosynthesis. In terms of biological role, catalyzes the formation of N(7)-methylguanine at position 46 (m7G46) in tRNA. In Streptococcus sanguinis (strain SK36), this protein is tRNA (guanine-N(7)-)-methyltransferase.